Here is a 227-residue protein sequence, read N- to C-terminus: UPF0441 protein YPO0661/y3517/YP_2976 (227 aa).

Positions 198–227 (GGFGESVAKQSSMQRSAATSSKTTTRSMGG) are disordered. The span at 212–227 (RSAATSSKTTTRSMGG) shows a compositional bias: low complexity.

It belongs to the UPF0441 family.

This Yersinia pestis protein is UPF0441 protein YPO0661/y3517/YP_2976.